A 610-amino-acid chain; its full sequence is Manganese lipoxygenase (610 aa).

The N-terminal stretch at 1 to 16 is a signal peptide; sequence MVALLIFLGIFTCVET. The region spanning 47 to 610 is the Lipoxygenase domain; that stretch reads FTLPNEDDEI…PGVIPFYLSV (564 aa). N-linked (GlcNAc...) asparagine glycans are attached at residues asparagine 157 and asparagine 259. Residues histidine 290 and histidine 295 each coordinate Mn(2+). N-linked (GlcNAc...) asparagine glycosylation is present at asparagine 386. Residues histidine 475 and asparagine 479 each contribute to the Mn(2+) site. Asparagine 540 carries an N-linked (GlcNAc...) asparagine glycan. Valine 610 contacts Mn(2+).

This sequence belongs to the lipoxygenase family. Manganese lipoxygenase subfamily. Requires Mn(2+) as cofactor. In terms of processing, N- and O-glycosylated.

Its subcellular location is the secreted. The catalysed reaction is (9Z,12Z)-octadecadienoate + O2 = (11S)-hydroperoxy-(9Z,12Z)-octadecadienoate. It catalyses the reaction (9Z,12Z)-octadecadienoate + O2 = (11R)-hydroperoxy-(9Z,12Z)-octadecadienoate. It carries out the reaction (9Z,12Z)-octadecadienoate + O2 = (13S)-hydroperoxy-(9Z,11E)-octadecadienoate. The enzyme catalyses (9Z,12Z,15Z)-octadecatrienoate + O2 = (11S)-hydroperoxy-(9Z,12Z,15Z)-octadecatrienoate. In terms of biological role, lipoxygenase that metabolizes linoleic and alpha-linolenic acids to 9-, 11- and 13-hydroperoxy fatty acids. Oxidizes linoleic acid to mainly 11R-, 13S- and racemic 9-HPODE, and alpha-linolenic acid to 11-HPOTrE. This Fusarium oxysporum (strain Fo5176) (Fusarium vascular wilt) protein is Manganese lipoxygenase.